The primary structure comprises 426 residues: 3-isopropylmalate dehydratase large subunit (426 aa).

Cys307, Cys367, and Cys370 together coordinate [4Fe-4S] cluster.

This sequence belongs to the aconitase/IPM isomerase family. LeuC type 2 subfamily. As to quaternary structure, heterodimer of LeuC and LeuD. [4Fe-4S] cluster is required as a cofactor.

It catalyses the reaction (2R,3S)-3-isopropylmalate = (2S)-2-isopropylmalate. Its pathway is amino-acid biosynthesis; L-leucine biosynthesis; L-leucine from 3-methyl-2-oxobutanoate: step 2/4. Catalyzes the isomerization between 2-isopropylmalate and 3-isopropylmalate, via the formation of 2-isopropylmaleate. This Aliarcobacter butzleri (strain RM4018) (Arcobacter butzleri) protein is 3-isopropylmalate dehydratase large subunit.